A 546-amino-acid polypeptide reads, in one-letter code: Phosphomethylpyrimidine synthase (546 aa).

Substrate contacts are provided by residues Asn145, Met174, Tyr203, His239, 259–261 (SRG), 300–303 (DGLR), and Glu339. His343 contributes to the Zn(2+) binding site. Residue Tyr366 coordinates substrate. Residue His407 coordinates Zn(2+). Residues Cys487, Cys490, and Cys495 each coordinate [4Fe-4S] cluster.

This sequence belongs to the ThiC family. [4Fe-4S] cluster serves as cofactor.

It catalyses the reaction 5-amino-1-(5-phospho-beta-D-ribosyl)imidazole + S-adenosyl-L-methionine = 4-amino-2-methyl-5-(phosphooxymethyl)pyrimidine + CO + 5'-deoxyadenosine + formate + L-methionine + 3 H(+). Its pathway is cofactor biosynthesis; thiamine diphosphate biosynthesis. Catalyzes the synthesis of the hydroxymethylpyrimidine phosphate (HMP-P) moiety of thiamine from aminoimidazole ribotide (AIR) in a radical S-adenosyl-L-methionine (SAM)-dependent reaction. The protein is Phosphomethylpyrimidine synthase of Mycobacterium marinum (strain ATCC BAA-535 / M).